A 1052-amino-acid polypeptide reads, in one-letter code: Isoleucine--tRNA ligase (1052 aa).

The 'HIGH' region motif lies at 58–68 (PFANGLPHYGH). Residues 627 to 631 (KMSKS) carry the 'KMSKS' region motif. Residue K630 participates in ATP binding.

This sequence belongs to the class-I aminoacyl-tRNA synthetase family. IleS type 2 subfamily. Monomer. It depends on Zn(2+) as a cofactor.

The protein resides in the cytoplasm. It catalyses the reaction tRNA(Ile) + L-isoleucine + ATP = L-isoleucyl-tRNA(Ile) + AMP + diphosphate. Catalyzes the attachment of isoleucine to tRNA(Ile). As IleRS can inadvertently accommodate and process structurally similar amino acids such as valine, to avoid such errors it has two additional distinct tRNA(Ile)-dependent editing activities. One activity is designated as 'pretransfer' editing and involves the hydrolysis of activated Val-AMP. The other activity is designated 'posttransfer' editing and involves deacylation of mischarged Val-tRNA(Ile). This Corynebacterium diphtheriae (strain ATCC 700971 / NCTC 13129 / Biotype gravis) protein is Isoleucine--tRNA ligase.